A 381-amino-acid chain; its full sequence is Dual specificity protein phosphatase 6 (381 aa).

A Rhodanese domain is found at 30–148; it reads GNERLLLMDC…FQAEFSLHCE (119 aa). Positions 176 to 203 are disordered; sequence SSSDIESDLDRDPNSATDSDGSPLSNSQ. The segment covering 189–203 has biased composition (polar residues); sequence NSATDSDGSPLSNSQ. One can recognise a Tyrosine-protein phosphatase domain in the interval 206 to 349; sequence FPVEILPFLY…LLDFERTLGL (144 aa). Cys293 (phosphocysteine intermediate) is an active-site residue.

Belongs to the protein-tyrosine phosphatase family. Non-receptor class dual specificity subfamily. In terms of assembly, interacts with MAPK1/ERK2. In terms of processing, ubiquitinated by the SCF(FBXO31) complex, leading to its proteasomal degradation. As to expression, expressed in keratinocytes (at protein level).

It is found in the cytoplasm. The enzyme catalyses O-phospho-L-tyrosyl-[protein] + H2O = L-tyrosyl-[protein] + phosphate. It catalyses the reaction O-phospho-L-seryl-[protein] + H2O = L-seryl-[protein] + phosphate. The catalysed reaction is O-phospho-L-threonyl-[protein] + H2O = L-threonyl-[protein] + phosphate. Functionally, dual specificity protein phosphatase, which mediates dephosphorylation and inactivation of MAP kinases. Has a specificity for the ERK family. Plays an important role in alleviating chronic postoperative pain. Necessary for the normal dephosphorylation of the long-lasting phosphorylated forms of spinal MAPK1/3 and MAP kinase p38 induced by peripheral surgery, which drives the resolution of acute postoperative allodynia. Also important for dephosphorylation of MAPK1/3 in local wound tissue, which further contributes to resolution of acute pain. Promotes cell differentiation by regulating MAPK1/MAPK3 activity and regulating the expression of AP1 transcription factors. The chain is Dual specificity protein phosphatase 6 (DUSP6) from Homo sapiens (Human).